The sequence spans 262 residues: Proenkephalin-A-A (262 aa).

The signal sequence occupies residues 1 to 24 (MGLEARHCCMFLLVFASLSVEIRA). 3 cysteine pairs are disulfide-bonded: C26/C48, C30/C52, and C33/C65. 5 propeptides span residues 110-131 (MDEL…LAKN), 139-177 (EYDS…GEIN), 190-201 (STDLEDETSGIQ), 211-221 (VGRPEWWEDYQ), and 229-253 (TRFT…PDME).

Belongs to the opioid neuropeptide precursor family. The N-terminal domain contains 6 conserved cysteines thought to be involved in disulfide bonding and/or processing.

It is found in the secreted. Enkephalin neuropeptides compete with and mimic the effects of opiate drugs. They play a role in a number of physiologic functions, including pain perception and responses to stress. The sequence is that of Proenkephalin-A-A (penk-a) from Xenopus laevis (African clawed frog).